The primary structure comprises 145 residues: Ribosome maturation factor RimP (145 aa).

Belongs to the RimP family.

Its subcellular location is the cytoplasm. Functionally, required for maturation of 30S ribosomal subunits. The sequence is that of Ribosome maturation factor RimP from Azotobacter vinelandii (strain DJ / ATCC BAA-1303).